We begin with the raw amino-acid sequence, 435 residues long: MSNQETEAGSKTISNDNLNVQITRGTHCQVKFDITVKPEAVVAAYQKALKTINKEINIPGFRKGKAPQQLILEKYGSNVQKECVDIVLQTGFNDALQLTHIHPLKDGHIKRPIVHYCTQEKGAHFVLEFEARPTIPSVQPQELHLHHQAPVQVTDEERKNALDQVLLQFTTYQPIEDRPVQEGDFINVDVTILEETPRLIIDNQRTQVNQSGLPSWIQEKVIGLNAGASAEGMTQPNEKFPDPDFKSVPFRVTVKTIWQGNMPAIDDELAKKVGLQTVDELYQKLNERLEQEAQEDIYKQHIHHLEDQLIEKYPFDLPLSYIESNKQARLDDYLKQLGQESQLPQNYEEIEKMIENSTIRGLQLYFLLRRVAADNKLEVSEEEVSQELSKQIALIPSGKSQIDIYGDKSKLREQLYNLALDRKIKKFLLDQAQWV.

In terms of domain architecture, PPIase FKBP-type spans Gly183 to Pro263.

This sequence belongs to the FKBP-type PPIase family. Tig subfamily.

It localises to the cytoplasm. It carries out the reaction [protein]-peptidylproline (omega=180) = [protein]-peptidylproline (omega=0). Functionally, involved in protein export. Acts as a chaperone by maintaining the newly synthesized protein in an open conformation. Functions as a peptidyl-prolyl cis-trans isomerase. The protein is Trigger factor of Protochlamydia amoebophila (strain UWE25).